The sequence spans 428 residues: MVIFKKFILKISSLRFAILLIIFIAISSGVGTFIPQGNDQQEYIDFYNETPILGFINGSQVIRLQLDHIYTSNWFLFSLILLCISLAACSFRRQIPSLKAALKWTDYKDEKKFYKLELITNYEIIQDADHILKADSLLRKKGWNISKFENRLSARKGLEGKLGPIIVHIGLIILLIGSAYGNFSSQSKEQYLRLGESLDLINESTNSRVKIKLKNFFIERESDGKPKQFISNLEFFSKQQNLNEIKTTQVNQPIRFKGLTIYQADWSVSNIVMEIDSVLYQLQLKPIPEIGDQIWGLLIELGRENKKNYLLTIDNENGPLKVSNIEDFSENFVYLNNNPIEINSSKLSLKKIIPSSGLIIKNDPSIPFIYLSFTLIIVGTILSLIPTNQIWILFNENTNKLFIGGLSNRNLLGFKKEFLKLSDEIKNN.

3 consecutive transmembrane segments (helical) span residues 14 to 34 (LRFA…GTFI), 72 to 92 (SNWF…CSFR), and 162 to 182 (LGPI…AYGN).

It belongs to the Ccs1/CcsB family. May interact with CcsA.

The protein resides in the cellular thylakoid membrane. Required during biogenesis of c-type cytochromes (cytochrome c6 and cytochrome f) at the step of heme attachment. This chain is Cytochrome c biogenesis protein CcsB, found in Prochlorococcus marinus subsp. pastoris (strain CCMP1986 / NIES-2087 / MED4).